An 80-amino-acid polypeptide reads, in one-letter code: Putative membrane protein insertion efficiency factor (80 aa).

Positions 61-80 (KTGKDPVPDHFSLKRNQEGE) are disordered. Positions 62–80 (TGKDPVPDHFSLKRNQEGE) are enriched in basic and acidic residues.

The protein belongs to the UPF0161 family.

It is found in the cell membrane. Functionally, could be involved in insertion of integral membrane proteins into the membrane. The sequence is that of Putative membrane protein insertion efficiency factor from Streptococcus pneumoniae serotype 19F (strain G54).